The sequence spans 100 residues: U-myrmeciitoxin(01)-Mg7b (100 aa).

A signal peptide spans Met1–Ala17. A propeptide spanning residues Ile18–Pro50 is cleaved from the precursor. An O-linked (GalNAc...) serine glycan is attached at Ser85. Thr94 and Thr95 each carry an O-linked (GalNAc...) threonine glycan.

Belongs to the formicidae venom precursor-01 superfamily. In terms of processing, glycosylation is critical to maintaining the aqueous solubility of this protein, but does not directly contribute to its activity. Expressed by the venom gland.

It is found in the secreted. Its subcellular location is the target cell membrane. Neurotoxin that triggers pain behavior and inflammation in mammals, and is paralytic and lethal to insects. Causes a time-dependent increase in cell leak current. May act by targeting membranes. In Myrmecia gulosa (Red bulldog ant), this protein is U-myrmeciitoxin(01)-Mg7b.